We begin with the raw amino-acid sequence, 203 residues long: MAEGDNRSTNLLAAETASLEEQLQGWGEVMLMADKVLRWERAWFPPAIMGVVSLVFLIIYYLDPSVLSGVSCFVMFLCLADYLVPILAPRIFGSNKWTTEQQQRFHEICSNLVKTRRRAVGWWKRLFTLKEEKPKMYFMTMIVSLAAVAWVGQQVHNLLLTYLIVTSLLLLPGLNQHGIILKYIGMAKREINKLLKQKEKKNE.

Over 1-41 the chain is Cytoplasmic; sequence MAEGDNRSTNLLAAETASLEEQLQGWGEVMLMADKVLRWER. A helical membrane pass occupies residues 42 to 62; the sequence is AWFPPAIMGVVSLVFLIIYYL. Residues 63 to 65 lie on the Lumenal side of the membrane; that stretch reads DPS. Residues 66 to 86 form a helical membrane-spanning segment; that stretch reads VLSGVSCFVMFLCLADYLVPI. The Cytoplasmic portion of the chain corresponds to 87-133; the sequence is LAPRIFGSNKWTTEQQQRFHEICSNLVKTRRRAVGWWKRLFTLKEEK. The helical transmembrane segment at 134–175 threads the bilayer; the sequence is PKMYFMTMIVSLAAVAWVGQQVHNLLLTYLIVTSLLLLPGLN. The Lumenal portion of the chain corresponds to 176-203; that stretch reads QHGIILKYIGMAKREINKLLKQKEKKNE.

This sequence belongs to the ARL6ip family. In terms of assembly, homooligomer. Heterodimer with ARL6IP5. Interacts with ARL6. Interacts with TMEM33. Interacts with ATL1. Expressed in all hematopoietic cell lineages, but the highest level of expression is found in early myeloid progenitor cells. Expressed in brain, bone marrow, thymus and lung. Expressed at low level in liver, kidney and spleen. Not detected in heart.

The protein resides in the endomembrane system. Its subcellular location is the endoplasmic reticulum membrane. It is found in the endoplasmic reticulum. Positively regulates SLC1A1/EAAC1-mediated glutamate transport by increasing its affinity for glutamate in a PKC activity-dependent manner. Promotes the catalytic efficiency of SLC1A1/EAAC1 probably by reducing its interaction with ARL6IP5, a negative regulator of SLC1A1/EAAC1-mediated glutamate transport. Plays a role in the formation and stabilization of endoplasmic reticulum tubules. Negatively regulates apoptosis, possibly by modulating the activity of caspase-9 (CASP9). Inhibits cleavage of CASP9-dependent substrates and downstream markers of apoptosis but not CASP9 itself. May be involved in protein transport, membrane trafficking, or cell signaling during hematopoietic maturation. The chain is ADP-ribosylation factor-like protein 6-interacting protein 1 (ARL6IP1) from Homo sapiens (Human).